The following is an 832-amino-acid chain: Regulator of drug sensitivity 1 (832 aa).

Residues 15–42 (CLQCKKIKRKCDKLRPACSRCQQNSLQC) constitute a DNA-binding region (zn(2)-C6 fungal-type).

It is found in the nucleus. In terms of biological role, zinc cluster transcription factor involved in resistance to cycloheximide. The protein is Regulator of drug sensitivity 1 (RDS1) of Saccharomyces cerevisiae (strain ATCC 204508 / S288c) (Baker's yeast).